The following is a 295-amino-acid chain: Ethanolamine ammonia-lyase small subunit (295 aa).

2 residues coordinate adenosylcob(III)alamin: Val-209 and Glu-230.

The protein belongs to the EutC family. The basic unit is a heterodimer which dimerizes to form tetramers. The heterotetramers trimerize; 6 large subunits form a core ring with 6 small subunits projecting outwards. Requires adenosylcob(III)alamin as cofactor.

The protein resides in the bacterial microcompartment. The catalysed reaction is ethanolamine = acetaldehyde + NH4(+). It participates in amine and polyamine degradation; ethanolamine degradation. Functionally, catalyzes the deamination of various vicinal amino-alcohols to oxo compounds. Allows this organism to utilize ethanolamine as the sole source of nitrogen and carbon in the presence of external vitamin B12. The sequence is that of Ethanolamine ammonia-lyase small subunit from Clostridium perfringens (strain ATCC 13124 / DSM 756 / JCM 1290 / NCIMB 6125 / NCTC 8237 / Type A).